Reading from the N-terminus, the 253-residue chain is ATP synthase subunit b 1 (253 aa).

The chain crosses the membrane as a helical span at residues 2–22; that stretch reads LIDWFTVIAELVNFLILVWLL.

This sequence belongs to the ATPase B chain family. In terms of assembly, F-type ATPases have 2 components, F(1) - the catalytic core - and F(0) - the membrane proton channel. F(1) has five subunits: alpha(3), beta(3), gamma(1), delta(1), epsilon(1). F(0) has four main subunits: a(1), b(2) and c(10-14). The alpha and beta chains form an alternating ring which encloses part of the gamma chain. F(1) is attached to F(0) by a central stalk formed by the gamma and epsilon chains, while a peripheral stalk is formed by the delta and b chains.

Its subcellular location is the cell inner membrane. In terms of biological role, f(1)F(0) ATP synthase produces ATP from ADP in the presence of a proton or sodium gradient. F-type ATPases consist of two structural domains, F(1) containing the extramembraneous catalytic core and F(0) containing the membrane proton channel, linked together by a central stalk and a peripheral stalk. During catalysis, ATP synthesis in the catalytic domain of F(1) is coupled via a rotary mechanism of the central stalk subunits to proton translocation. Its function is as follows. Component of the F(0) channel, it forms part of the peripheral stalk, linking F(1) to F(0). In Prosthecochloris aestuarii (strain DSM 271 / SK 413), this protein is ATP synthase subunit b 1.